Reading from the N-terminus, the 521-residue chain is Protein PLM2 (521 aa).

Positions 1–63 are disordered; it reads MSHLFPPSSP…SIGRQSSPVK (63 aa). Residues 51-63 show a composition bias toward polar residues; that stretch reads PSSSIGRQSSPVK. Positions 102-156 constitute an FHA domain; sequence LAIGRKKSVCNIILPCRKNISRQHAFISYAADRNEIKLECNGTNGLSVHLPYSMQ. Ser281, Ser295, Ser302, and Ser384 each carry phosphoserine.

It belongs to the PLM2/TOS4 family. Phosphorylated by CDC28.

The protein localises to the nucleus. Functionally, binds to the promoters of genes with functions important for the G1/S (start) transition; primarily genes involved in DNA synthesis and repair, chromosome segregation, nuclear division and transcription. This chain is Protein PLM2 (PLM2), found in Saccharomyces cerevisiae (strain ATCC 204508 / S288c) (Baker's yeast).